The primary structure comprises 374 residues: Chaperone protein DnaJ (374 aa).

The 66-residue stretch at 5–70 folds into the J domain; that stretch reads DYYEVLGVNR…RKRASYDQFG (66 aa). The segment at 133-210 adopts a CR-type zinc-finger fold; that stretch reads GLSRTIKVPT…CHGQGRQQQT (78 aa). Zn(2+) contacts are provided by C146, C149, C162, C165, C184, C187, C198, and C201. CXXCXGXG motif repeat units follow at residues 146-153, 162-169, 184-191, and 198-205; these read CKTCNGSG, CPRCNGSG, CSVCRGRG, and CTDCHGQG.

The protein belongs to the DnaJ family. In terms of assembly, homodimer. Requires Zn(2+) as cofactor.

It is found in the cytoplasm. Its function is as follows. Participates actively in the response to hyperosmotic and heat shock by preventing the aggregation of stress-denatured proteins and by disaggregating proteins, also in an autonomous, DnaK-independent fashion. Unfolded proteins bind initially to DnaJ; upon interaction with the DnaJ-bound protein, DnaK hydrolyzes its bound ATP, resulting in the formation of a stable complex. GrpE releases ADP from DnaK; ATP binding to DnaK triggers the release of the substrate protein, thus completing the reaction cycle. Several rounds of ATP-dependent interactions between DnaJ, DnaK and GrpE are required for fully efficient folding. Also involved, together with DnaK and GrpE, in the DNA replication of plasmids through activation of initiation proteins. In Coxiella burnetii (strain CbuG_Q212) (Coxiella burnetii (strain Q212)), this protein is Chaperone protein DnaJ.